A 444-amino-acid polypeptide reads, in one-letter code: Elongation factor 1-alpha (444 aa).

In terms of domain architecture, tr-type G spans 14–235 (KPHLNLAIIG…ALDAIEPPPR (222 aa)). Positions 23 to 30 (GHVDHGKS) are G1. 23–30 (GHVDHGKS) contributes to the GTP binding site. Mg(2+) is bound at residue serine 30. Positions 79–83 (GVTIE) are G2. Residues 100–103 (DLPG) are G3. GTP-binding positions include 100–104 (DLPGH) and 162–165 (NKMD). A G4 region spans residues 162 to 165 (NKMD). The segment at 201–203 (SAV) is G5.

It belongs to the TRAFAC class translation factor GTPase superfamily. Classic translation factor GTPase family. EF-Tu/EF-1A subfamily.

It localises to the cytoplasm. The enzyme catalyses GTP + H2O = GDP + phosphate + H(+). Its function is as follows. GTP hydrolase that promotes the GTP-dependent binding of aminoacyl-tRNA to the A-site of ribosomes during protein biosynthesis. This chain is Elongation factor 1-alpha, found in Caldivirga maquilingensis (strain ATCC 700844 / DSM 13496 / JCM 10307 / IC-167).